Here is a 210-residue protein sequence, read N- to C-terminus: Ribosomal RNA large subunit methyltransferase E (210 aa).

The S-adenosyl-L-methionine site is built by G67, W69, D87, D103, and D128. Catalysis depends on K168, which acts as the Proton acceptor.

Belongs to the class I-like SAM-binding methyltransferase superfamily. RNA methyltransferase RlmE family.

Its subcellular location is the cytoplasm. It carries out the reaction uridine(2552) in 23S rRNA + S-adenosyl-L-methionine = 2'-O-methyluridine(2552) in 23S rRNA + S-adenosyl-L-homocysteine + H(+). In terms of biological role, specifically methylates the uridine in position 2552 of 23S rRNA at the 2'-O position of the ribose in the fully assembled 50S ribosomal subunit. The polypeptide is Ribosomal RNA large subunit methyltransferase E (Psychrobacter arcticus (strain DSM 17307 / VKM B-2377 / 273-4)).